Reading from the N-terminus, the 234-residue chain is Gem-associated protein 8 (234 aa).

Residues 60–116 (LAQSPAAKGGTSPKSRSKSPSASGDACRRRSRPGKPGPQRRSTEKPARFAEDNDSES) are disordered. Over residues 67–83 (KGGTSPKSRSKSPSASG) the composition is skewed to low complexity. The segment covering 100–110 (RSTEKPARFAE) has biased composition (basic and acidic residues). Residues 130–153 (ITDELRQYFAETEQHREELRRQHQ) are a coiled coil.

Part of the core SMN complex that contains SMN1, GEMIN2/SIP1, DDX20/GEMIN3, GEMIN4, GEMIN5, GEMIN6, GEMIN7, GEMIN8 and STRAP/UNRIP. Part of the SMN-Sm complex that contains SMN1, GEMIN2/SIP1, DDX20/GEMIN3, GEMIN4, GEMIN5, GEMIN6, GEMIN7, GEMIN8, STRAP/UNRIP and the Sm proteins SNRPB, SNRPD1, SNRPD2, SNRPD3, SNRPE, SNRPF and SNRPG. Interacts with GEMIN6; the interaction is direct. Interacts with GEMIN7; the interaction is direct. Interacts with SMN1; the interaction is direct. Interacts with GEMIN4; the interaction is direct.

The protein localises to the nucleus. It localises to the gem. It is found in the cytoplasm. Its function is as follows. The SMN complex catalyzes the assembly of small nuclear ribonucleoproteins (snRNPs), the building blocks of the spliceosome, and thereby plays an important role in the splicing of cellular pre-mRNAs. Most spliceosomal snRNPs contain a common set of Sm proteins SNRPB, SNRPD1, SNRPD2, SNRPD3, SNRPE, SNRPF and SNRPG that assemble in a heptameric protein ring on the Sm site of the small nuclear RNA to form the core snRNP (Sm core). In the cytosol, the Sm proteins SNRPD1, SNRPD2, SNRPE, SNRPF and SNRPG are trapped in an inactive 6S pICln-Sm complex by the chaperone CLNS1A that controls the assembly of the core snRNP. To assemble core snRNPs, the SMN complex accepts the trapped 5Sm proteins from CLNS1A forming an intermediate. Binding of snRNA inside 5Sm triggers eviction of the SMN complex, thereby allowing binding of SNRPD3 and SNRPB to complete assembly of the core snRNP. The sequence is that of Gem-associated protein 8 (GEMIN8) from Bos taurus (Bovine).